The chain runs to 843 residues: Histone-lysine N-methyltransferase PRDM9 (843 aa).

The KRAB-related domain maps to 23-86 (KVKDEFKDIS…QRQAMKPQIN (64 aa)). Disordered regions lie at residues 85–104 (INDS…VSPP) and 110–170 (VKHS…KKLK). Residues C205, C208, C216, and H219 each coordinate Zn(2+). The SET domain occupies 244–358 (PGLRISPSGI…PGCELLVWYG (115 aa)). Residues 256 to 258 (AGL), Y291, and 320 to 321 (NC) each bind S-adenosyl-L-methionine. 288–294 (NSGYSWL) serves as a coordination point for substrate. Residue Y357 participates in substrate binding. K368 is subject to N6,N6,N6-trimethyllysine; alternate. K368 carries the N6-methyllysine; alternate modification. K372 and K374 each carry N6-methyllysine. The segment at 388-411 (HPCLLCSLAFSSQKFLTQHMEWNH) adopts a C2H2-type 1 zinc-finger fold. Zn(2+) is bound by residues C390, C393, H406, and H411. A disordered region spans residues 418–493 (GTSARINPKP…VEELRTGQTT (76 aa)). Positions 436–454 (QEQHVDSQNKNDKASNEVK) are enriched in basic and acidic residues. Residues 462 to 472 (RISTTFPSTLK) are compositionally biased toward polar residues. Over residues 473 to 488 (EQMRSEESKRTVEELR) the composition is skewed to basic and acidic residues. The C2H2-type 2; degenerate zinc finger occupies 513–531 (QCGQYFSDKSNVNEHQKTH). C2H2-type zinc fingers lie at residues 537–559 (YVCR…QRTH), 565–587 (YVCR…QRTH), 593–615 (YVCR…QRTH), 621–643 (YVCR…QRTH), 649–671 (YVCR…QRTH), 677–699 (YVCR…QRTH), 705–727 (YVCR…QRTH), 733–755 (YVCR…QRTH), 761–783 (YVCR…QRTH), 789–811 (YVCR…QRTH), and 817–839 (YVCR…QRTH). Zn(2+)-binding residues include C707, C710, H723, H727, C735, C738, H751, H755, C763, C766, H779, H783, C791, C794, H807, and H811. The interval 715 to 805 (TAKSNLIQHQ…RGFTQKSNLI (91 aa)) is DNA-binding.

It belongs to the class V-like SAM-binding methyltransferase superfamily. Homodimer. Interacts with EHMT2 and CDYL; interaction only takes place when PRDM9 is bound to hotspot DNA. Interacts with CXXC1; this interaction does not link PRDM9-activated recombination hotspot sites with DSB machinery and is not required for the hotspot recognition pathway. Forms a complex with EWSR1, REC8, SYCP3 and SYCP1; complex formation is dependent of phosphorylated form of REC8 and requires PRDM9 bound to hotspot DNA; EWSR1 joins PRDM9 with the chromosomal axis through REC8. Mono-methylated; automethylated. Tri-methylated; automethylated. Mono-methylation is predominant; automethylation is lower and slower than H3 peptide methylation and is in a highest S-adenosyl-L-methionine concentration-dependent. There are two major sites for automethylation at Lys-368 and Lys-374. Lysines can be simultaneously methylated, such as Lys-368(me3)/Lys-372(me1), Lys-368(me1)/Lys-374(me1) and Lys-368(me1)/Lys-372(me1)/Lys-374(me1). Automethylation is an intramolecular (cis) process. As to expression, specifically expressed in germ cells entering meiotic prophase in female fetal gonads and in postnatal testis. Expressed in early meiotic prophase.

It is found in the nucleus. It localises to the chromosome. The catalysed reaction is L-lysyl-[protein] + S-adenosyl-L-methionine = N(6)-methyl-L-lysyl-[protein] + S-adenosyl-L-homocysteine + H(+). The enzyme catalyses N(6),N(6)-dimethyl-L-lysyl-[protein] + S-adenosyl-L-methionine = N(6),N(6),N(6)-trimethyl-L-lysyl-[protein] + S-adenosyl-L-homocysteine + H(+). It carries out the reaction L-lysyl(4)-[histone H3] + 3 S-adenosyl-L-methionine = N(6),N(6),N(6)-trimethyl-L-lysyl(4)-[histone H3] + 3 S-adenosyl-L-homocysteine + 3 H(+). It catalyses the reaction L-lysyl(36)-[histone H3] + 3 S-adenosyl-L-methionine = N(6),N(6),N(6)-trimethyl-L-lysyl(36)-[histone H3] + 3 S-adenosyl-L-homocysteine + 3 H(+). The catalysed reaction is L-lysyl(9)-[histone H3] + 3 S-adenosyl-L-methionine = N(6),N(6),N(6)-trimethyl-L-lysyl(9)-[histone H3] + 3 S-adenosyl-L-homocysteine + 3 H(+). The enzyme catalyses L-lysyl(20)-[histone H4] + S-adenosyl-L-methionine = N(6)-methyl-L-lysyl(20)-[histone H4] + S-adenosyl-L-homocysteine + H(+). It carries out the reaction N(6)-methyl-L-lysyl(20)-[histone H4] + S-adenosyl-L-methionine = N(6),N(6)-dimethyl-L-lysyl(20)-[histone H4] + S-adenosyl-L-homocysteine + H(+). Histone methyltransferase that sequentially mono-, di-, and tri-methylates both 'Lys-4' (H3K4) and 'Lys-36' (H3K36) of histone H3 to produce respectively trimethylated 'Lys-4' (H3K4me3) and trimethylated 'Lys-36' (H3K36me3) histone H3 and plays a key role in meiotic prophase by determining hotspot localization thereby promoting meiotic recombination. Can also methylate all four core histones with H3 being the best substrate and the most highly modified. Is also able, on one hand, to mono and di-methylate H4K20 and on other hand to trimethylate H3K9 with the di-methylated H3K9 as the best substrate. During meiotic prophase, binds specific DNA sequences through its zinc finger domains thereby determining hotspot localization where it promotes local H3K4me3 and H3K36me3 enrichment on the same nucleosomes through its histone methyltransferase activity. Thereby promotes double-stranded breaks (DSB) formation, at this subset of PRDM9-binding sites, that initiates meiotic recombination for the proper meiotic progression. During meiotic progression hotspot-bound PRDM9 interacts with several complexes; in early leptonema binds CDYL and EHMT2 followed by EWSR1 and CXXC1 by the end of leptonema. EWSR1 joins PRDM9 with the chromosomal axis through REC8. In this way, controls the DSB repair pathway, pairing of homologous chromosomes and sex body formation. Moreover plays a central role in the transcriptional activation of genes during early meiotic prophase thanks to H3K4me3 and H3K36me3 enrichment that represents a specific tag for epigenetic transcriptional activation. In addition performs automethylation. Acetylation and phosphorylation of histone H3 attenuate or prevent histone H3 methylation. In Mus musculus (Mouse), this protein is Histone-lysine N-methyltransferase PRDM9.